The primary structure comprises 415 residues: Esterase FrsA (415 aa).

Residues 1–23 (MANRNLSESLFKPRQKHQETSTL) form a disordered region.

The protein belongs to the FrsA family.

The catalysed reaction is a carboxylic ester + H2O = an alcohol + a carboxylate + H(+). Its function is as follows. Catalyzes the hydrolysis of esters. In Photorhabdus laumondii subsp. laumondii (strain DSM 15139 / CIP 105565 / TT01) (Photorhabdus luminescens subsp. laumondii), this protein is Esterase FrsA.